An 848-amino-acid chain; its full sequence is Oligopeptide transport ATP-binding protein OppF (848 aa).

An ABC transporter domain is found at 13-785 (VKALSMMFKV…PVHPYTRSLI (773 aa)). 47-54 (GESGSGKS) contributes to the ATP binding site.

Belongs to the ABC transporter superfamily. As to quaternary structure, the complex is composed of two ATP-binding proteins (OppD and OppF), two transmembrane proteins (OppB and OppC) and a solute-binding protein (OppA).

It localises to the cell membrane. The enzyme catalyses a [peptide](out) + ATP + H2O = a [peptide](in) + ADP + phosphate + H(+). Functionally, part of the ABC transporter complex OppABCDF involved in the uptake of oligopeptides. Probably responsible for energy coupling to the transport system. The protein is Oligopeptide transport ATP-binding protein OppF (oppF) of Mycoplasma genitalium (strain ATCC 33530 / DSM 19775 / NCTC 10195 / G37) (Mycoplasmoides genitalium).